The following is a 258-amino-acid chain: uncharacterized protein (258 aa).

The N-terminal stretch at 1–19 (MVGILPLCCSGCVPSLCCS) is a signal peptide. 3 helical membrane passes run 94–114 (GLLLPCLLGVGSWLLFNNWTG), 197–217 (CLILGIFLFCFVLAVIGLPYI), and 219–239 (PGLSLSVALLWQSLILLSSLV).

The protein localises to the membrane. This is an uncharacterized protein from Homo sapiens (Human).